Reading from the N-terminus, the 265-residue chain is Deoxyguanosine kinase, mitochondrial (265 aa).

Residue 32 to 40 (GNIAVGKST) coordinates ATP. Residues glutamate 57, tyrosine 88, glutamine 99, and arginine 106 each contribute to the substrate site. Glutamate 129 serves as the catalytic Proton acceptor. Substrate contacts are provided by arginine 130 and aspartate 135. 190–194 (RLQRR) contacts ATP. Glutamate 199 contacts substrate. An ATP-binding site is contributed by 242–244 (EDF).

It belongs to the DCK/DGK family. Homodimer.

Its subcellular location is the mitochondrion. It catalyses the reaction 2'-deoxyguanosine + ATP = dGMP + ADP + H(+). In terms of biological role, phosphorylates deoxyguanosine in the mitochondrial matrix with high efficiency but shows very low activity against other deoxynucleosides. The protein is Deoxyguanosine kinase, mitochondrial of Xenopus laevis (African clawed frog).